A 256-amino-acid chain; its full sequence is GTP cyclohydrolase FolE2 (256 aa).

Belongs to the GTP cyclohydrolase IV family.

The enzyme catalyses GTP + H2O = 7,8-dihydroneopterin 3'-triphosphate + formate + H(+). It participates in cofactor biosynthesis; 7,8-dihydroneopterin triphosphate biosynthesis; 7,8-dihydroneopterin triphosphate from GTP: step 1/1. Converts GTP to 7,8-dihydroneopterin triphosphate. This is GTP cyclohydrolase FolE2 from Maridesulfovibrio salexigens (strain ATCC 14822 / DSM 2638 / NCIMB 8403 / VKM B-1763) (Desulfovibrio salexigens).